The sequence spans 224 residues: MTQVKPKEVDEISLQLVVGLGNPGPQYANTRHNCGFMVVDRLAQRWGIPLVLEKRFQGSYGEGFALGGKRRLLKPETYMNRSGQSVRAVLDWYKLDLASVLVVYDDMDLPLGRLRLRGSGSAGGHNGMKSIIQHLGSEAFPRLRLGVGKPKGSQDVVGHVLGGFAPAEQEVLERVLDVAVEAVECCWQEGLRTAMNRFNPLDLSGPSSDLDGSNPAPGHGEASS.

Tyr-27 serves as a coordination point for tRNA. The active-site Proton acceptor is the His-32. Residues Tyr-78, Asn-80, and Asn-126 each coordinate tRNA. The segment covering 203–215 (LSGPSSDLDGSNP) has biased composition (low complexity). The disordered stretch occupies residues 203–224 (LSGPSSDLDGSNPAPGHGEASS).

It belongs to the PTH family. As to quaternary structure, monomer.

It localises to the cytoplasm. It catalyses the reaction an N-acyl-L-alpha-aminoacyl-tRNA + H2O = an N-acyl-L-amino acid + a tRNA + H(+). Functionally, hydrolyzes ribosome-free peptidyl-tRNAs (with 1 or more amino acids incorporated), which drop off the ribosome during protein synthesis, or as a result of ribosome stalling. In terms of biological role, catalyzes the release of premature peptidyl moieties from peptidyl-tRNA molecules trapped in stalled 50S ribosomal subunits, and thus maintains levels of free tRNAs and 50S ribosomes. The sequence is that of Peptidyl-tRNA hydrolase from Synechococcus sp. (strain JA-2-3B'a(2-13)) (Cyanobacteria bacterium Yellowstone B-Prime).